Here is a 130-residue protein sequence, read N- to C-terminus: Small ribosomal subunit protein bS16 (130 aa).

A disordered region spans residues 80 to 130 (AGHTPKKERANMKKAQPGKKAVERAEEKAAKASAAAEAPAEAPAAEAAAEE). Over residues 99–109 (KAVERAEEKAA) the composition is skewed to basic and acidic residues. The span at 110–130 (KASAAAEAPAEAPAAEAAAEE) shows a compositional bias: low complexity.

The protein belongs to the bacterial ribosomal protein bS16 family.

This chain is Small ribosomal subunit protein bS16, found in Jannaschia sp. (strain CCS1).